The primary structure comprises 152 residues: Small ribosomal subunit protein uS15 (152 aa).

Belongs to the universal ribosomal protein uS15 family. As to quaternary structure, part of the 30S ribosomal subunit.

The protein is Small ribosomal subunit protein uS15 of Methanocorpusculum labreanum (strain ATCC 43576 / DSM 4855 / Z).